Here is a 385-residue protein sequence, read N- to C-terminus: Glycerol-3-phosphate dehydrogenase [NAD(+)] 1 (385 aa).

NAD(+)-binding positions include 29–34 (GSGNWG), Phe-121, Lys-144, and Ala-177. Residue Lys-144 coordinates substrate. The Proton acceptor role is filled by Lys-232. NAD(+)-binding residues include Arg-296 and Gln-325. Position 296 to 297 (296 to 297 (RN)) interacts with substrate. Position 376 is a phosphoserine (Ser-376). Phosphothreonine is present on Thr-382.

Belongs to the NAD-dependent glycerol-3-phosphate dehydrogenase family.

Its subcellular location is the cytoplasm. It catalyses the reaction sn-glycerol 3-phosphate + NAD(+) = dihydroxyacetone phosphate + NADH + H(+). The polypeptide is Glycerol-3-phosphate dehydrogenase [NAD(+)] 1 (gpd1) (Schizosaccharomyces pombe (strain 972 / ATCC 24843) (Fission yeast)).